Reading from the N-terminus, the 151-residue chain is Deoxyuridine 5'-triphosphate nucleotidohydrolase (151 aa).

Residues 70–72 (RSG), asparagine 83, 87–89 (LID), and methionine 97 each bind substrate.

Belongs to the dUTPase family. Mg(2+) is required as a cofactor.

The catalysed reaction is dUTP + H2O = dUMP + diphosphate + H(+). It participates in pyrimidine metabolism; dUMP biosynthesis; dUMP from dCTP (dUTP route): step 2/2. In terms of biological role, this enzyme is involved in nucleotide metabolism: it produces dUMP, the immediate precursor of thymidine nucleotides and it decreases the intracellular concentration of dUTP so that uracil cannot be incorporated into DNA. The polypeptide is Deoxyuridine 5'-triphosphate nucleotidohydrolase (Pseudomonas entomophila (strain L48)).